A 396-amino-acid polypeptide reads, in one-letter code: 1-deoxy-D-xylulose 5-phosphate reductoisomerase (396 aa).

Residues Thr15, Gly16, Ser17, Ile18, Gly41, and Asn129 each coordinate NADPH. Lys130 contacts 1-deoxy-D-xylulose 5-phosphate. Glu131 provides a ligand contact to NADPH. Asp155 contacts Mn(2+). 1-deoxy-D-xylulose 5-phosphate is bound by residues Ser156, Glu157, Ser182, and His205. Residue Glu157 coordinates Mn(2+). Position 211 (Gly211) interacts with NADPH. Residues Ser218, Asn223, Lys224, and Glu227 each coordinate 1-deoxy-D-xylulose 5-phosphate. Glu227 is a Mn(2+) binding site.

Belongs to the DXR family. It depends on Mg(2+) as a cofactor. Mn(2+) is required as a cofactor.

It catalyses the reaction 2-C-methyl-D-erythritol 4-phosphate + NADP(+) = 1-deoxy-D-xylulose 5-phosphate + NADPH + H(+). It functions in the pathway isoprenoid biosynthesis; isopentenyl diphosphate biosynthesis via DXP pathway; isopentenyl diphosphate from 1-deoxy-D-xylulose 5-phosphate: step 1/6. Its function is as follows. Catalyzes the NADPH-dependent rearrangement and reduction of 1-deoxy-D-xylulose-5-phosphate (DXP) to 2-C-methyl-D-erythritol 4-phosphate (MEP). In Xanthomonas campestris pv. campestris (strain 8004), this protein is 1-deoxy-D-xylulose 5-phosphate reductoisomerase.